A 346-amino-acid polypeptide reads, in one-letter code: tRNA(Ile)-lysidine synthase (346 aa).

32-37 (SGGPDS) lines the ATP pocket.

Belongs to the tRNA(Ile)-lysidine synthase family.

The protein localises to the cytoplasm. The catalysed reaction is cytidine(34) in tRNA(Ile2) + L-lysine + ATP = lysidine(34) in tRNA(Ile2) + AMP + diphosphate + H(+). Its function is as follows. Ligates lysine onto the cytidine present at position 34 of the AUA codon-specific tRNA(Ile) that contains the anticodon CAU, in an ATP-dependent manner. Cytidine is converted to lysidine, thus changing the amino acid specificity of the tRNA from methionine to isoleucine. The sequence is that of tRNA(Ile)-lysidine synthase from Rhodopseudomonas palustris (strain ATCC BAA-98 / CGA009).